Here is a 483-residue protein sequence, read N- to C-terminus: Cobyric acid synthase (483 aa).

The region spanning 248-435 is the GATase cobBQ-type domain; it reads VLKVVVPVLP…LHGLFETAAA (188 aa). Cys-329 functions as the Nucleophile in the catalytic mechanism. Residue His-427 is part of the active site.

The protein belongs to the CobB/CobQ family. CobQ subfamily.

The protein operates within cofactor biosynthesis; adenosylcobalamin biosynthesis. Its function is as follows. Catalyzes amidations at positions B, D, E, and G on adenosylcobyrinic A,C-diamide. NH(2) groups are provided by glutamine, and one molecule of ATP is hydrogenolyzed for each amidation. The sequence is that of Cobyric acid synthase from Pseudomonas fluorescens (strain SBW25).